The following is a 119-amino-acid chain: Large ribosomal subunit protein bL20 (119 aa).

It belongs to the bacterial ribosomal protein bL20 family.

Functionally, binds directly to 23S ribosomal RNA and is necessary for the in vitro assembly process of the 50S ribosomal subunit. It is not involved in the protein synthesizing functions of that subunit. The polypeptide is Large ribosomal subunit protein bL20 (Acidithiobacillus ferrooxidans (strain ATCC 23270 / DSM 14882 / CIP 104768 / NCIMB 8455) (Ferrobacillus ferrooxidans (strain ATCC 23270))).